Reading from the N-terminus, the 142-residue chain is Immunoglobulin iota chain (142 aa).

The first 19 residues, 1–19 (MAWTSVLLMLLAYLTGCGP), serve as a signal peptide directing secretion. Positions 20–41 (QPMVHQPPLASSSLGATIRLSC) are framework-1. A disulfide bond links Cys41 and Cys115. The tract at residues 42 to 56 (TLSNDHNIGIYSIYW) is complementarity-determining-1. The interval 57 to 70 (YQQRPGHPPRFLLR) is framework-2. Residues 71-81 (YFSHSDKHQGP) form a complementarity-determining-2 region. A framework-3 region spans residues 82 to 115 (DIPPRFSGSKDTTRNLGYLSISELQPEDEAVYYC).

The protein belongs to the immunoglobulin superfamily. In terms of assembly, interacts with IGLL1. Interacts with SYNV1/HRD1 (via N-terminus); this interaction leads to increased VPREB1A ubiquitination and degradation in pre-B cells, possibly through a lysosomal, not proteasomal, pathway. Only expressed by pre-B-cells.

Its subcellular location is the endoplasmic reticulum. In terms of biological role, associates with the Ig-mu chain to form a molecular complex that is expressed on the surface of pre-B-cells. This complex presumably regulates Ig gene rearrangements in the early steps of B-cell differentiation. The protein is Immunoglobulin iota chain of Mus musculus (Mouse).